Consider the following 738-residue polypeptide: DNA topoisomerase 4 subunit A (738 aa).

The 465-residue stretch at 32–496 (LPDVRDGLKP…SFEEVDLTNQ (465 aa)) folds into the Topo IIA-type catalytic domain. Y120 serves as the catalytic O-(5'-phospho-DNA)-tyrosine intermediate.

The protein belongs to the type II topoisomerase GyrA/ParC subunit family. ParC type 1 subfamily. In terms of assembly, heterotetramer composed of ParC and ParE.

It is found in the cell membrane. The catalysed reaction is ATP-dependent breakage, passage and rejoining of double-stranded DNA.. Functionally, topoisomerase IV is essential for chromosome segregation. It relaxes supercoiled DNA. Performs the decatenation events required during the replication of a circular DNA molecule. The chain is DNA topoisomerase 4 subunit A from Rickettsia prowazekii (strain Madrid E).